A 439-amino-acid chain; its full sequence is Tol-Pal system protein TolB (439 aa).

An N-terminal signal peptide occupies residues 1–22 (MKKPLRWLAALTVLLLPLSALA).

The protein belongs to the TolB family. The Tol-Pal system is composed of five core proteins: the inner membrane proteins TolA, TolQ and TolR, the periplasmic protein TolB and the outer membrane protein Pal. They form a network linking the inner and outer membranes and the peptidoglycan layer.

The protein resides in the periplasm. Its function is as follows. Part of the Tol-Pal system, which plays a role in outer membrane invagination during cell division and is important for maintaining outer membrane integrity. This chain is Tol-Pal system protein TolB, found in Xanthomonas oryzae pv. oryzae (strain PXO99A).